The sequence spans 198 residues: dTTP/UTP pyrophosphatase (198 aa).

The active-site Proton acceptor is aspartate 69.

Belongs to the Maf family. YhdE subfamily. A divalent metal cation serves as cofactor.

It is found in the cytoplasm. The enzyme catalyses dTTP + H2O = dTMP + diphosphate + H(+). It carries out the reaction UTP + H2O = UMP + diphosphate + H(+). Nucleoside triphosphate pyrophosphatase that hydrolyzes dTTP and UTP. May have a dual role in cell division arrest and in preventing the incorporation of modified nucleotides into cellular nucleic acids. The protein is dTTP/UTP pyrophosphatase of Idiomarina loihiensis (strain ATCC BAA-735 / DSM 15497 / L2-TR).